The sequence spans 252 residues: UPF0246 protein FP0718 (252 aa).

It belongs to the UPF0246 family.

The protein is UPF0246 protein FP0718 of Flavobacterium psychrophilum (strain ATCC 49511 / DSM 21280 / CIP 103535 / JIP02/86).